The primary structure comprises 389 residues: MDLFEYQAKELFAKHGVPTSAGRVTDTVAGAREIAEEIGKPVMVKAQVKVGGRGKAGGVKYSPDVDAAVANAEAILGLDIKGHVVKKLLVAEASDIAEEYYISFLLDRTNRTYLAMCSVEGGVEIEVTAEENPDALAKIPVDAVKGVDLAFARSIAEAGKLPAEVLDAAAVTIQKLWEVFINEDALLVEVNPLVRTPDDQILALDGKVTLDENAAFRQPGHEAFEDRDATDPLELKAKENDLNYVKLDGEVGIIGNGAGLVMSTLDVVAYAGENHGGVKPANFLDIGGGASAAVMAAGLDVILNDAQVKSVFVNVFGGITACDAVANGIVGALKTLGDEANKPLVVRLDGNNVEEGRRILAEANHPLVTVVATMDEAADKAAELAHAAK.

Residues 9 to 236 (KELFAKHGVP…RDATDPLELK (228 aa)) enclose the ATP-grasp domain. ATP is bound by residues lysine 45, 52-54 (GRG), serine 94, and glutamate 99. Mg(2+) contacts are provided by asparagine 191 and aspartate 205. Residues asparagine 256 and 318–320 (GIT) each bind substrate.

Belongs to the succinate/malate CoA ligase beta subunit family. In terms of assembly, heterotetramer of two alpha and two beta subunits. Mg(2+) is required as a cofactor.

The enzyme catalyses succinate + ATP + CoA = succinyl-CoA + ADP + phosphate. It catalyses the reaction GTP + succinate + CoA = succinyl-CoA + GDP + phosphate. The protein operates within carbohydrate metabolism; tricarboxylic acid cycle; succinate from succinyl-CoA (ligase route): step 1/1. Succinyl-CoA synthetase functions in the citric acid cycle (TCA), coupling the hydrolysis of succinyl-CoA to the synthesis of either ATP or GTP and thus represents the only step of substrate-level phosphorylation in the TCA. The beta subunit provides nucleotide specificity of the enzyme and binds the substrate succinate, while the binding sites for coenzyme A and phosphate are found in the alpha subunit. The sequence is that of Succinate--CoA ligase [ADP-forming] subunit beta from Rhodococcus erythropolis (strain PR4 / NBRC 100887).